A 314-amino-acid polypeptide reads, in one-letter code: S-methyl-5'-thioadenosine phosphorylase (314 aa).

Phosphate-binding positions include S31, 73–74 (RH), and 106–107 (SA). M207 is a substrate binding site. T208 is a phosphate binding site. 231–233 (DYD) contributes to the substrate binding site.

The protein belongs to the PNP/MTAP phosphorylase family. MTAP subfamily. In terms of assembly, homohexamer. Dimer of a homotrimer.

It catalyses the reaction S-methyl-5'-thioadenosine + phosphate = 5-(methylsulfanyl)-alpha-D-ribose 1-phosphate + adenine. Its pathway is amino-acid biosynthesis; L-methionine biosynthesis via salvage pathway; S-methyl-5-thio-alpha-D-ribose 1-phosphate from S-methyl-5'-thioadenosine (phosphorylase route): step 1/1. Its function is as follows. Catalyzes the reversible phosphorylation of S-methyl-5'-thioadenosine (MTA) to adenine and 5-methylthioribose-1-phosphate. Involved in the breakdown of MTA, a major by-product of polyamine biosynthesis. Responsible for the first step in the methionine salvage pathway after MTA has been generated from S-adenosylmethionine. Has broad substrate specificity with 6-aminopurine nucleosides as preferred substrates. The sequence is that of S-methyl-5'-thioadenosine phosphorylase from Prochlorococcus marinus (strain SARG / CCMP1375 / SS120).